The chain runs to 188 residues: MAAKLIVGLGNPGPKYSWTRHNAGFMVLDRLASISGIQVTRKAFSGLSGDGNWAAERVYLLKPQTFMNLSGRSVAEALRFYKLSLSDLIVIHDDLDIPFGKVKLKEGGGHGGHNGLRSLAQELGSSAYARIRVGIGRPVHGDVVNFVLANFAKEEMDSLLEVLDTSVDALEMMIKEGMPKAMSIFNAR.

Tyrosine 16 provides a ligand contact to tRNA. Histidine 21 acts as the Proton acceptor in catalysis. Phenylalanine 66, asparagine 68, and asparagine 114 together coordinate tRNA.

Belongs to the PTH family. As to quaternary structure, monomer.

The protein resides in the cytoplasm. The enzyme catalyses an N-acyl-L-alpha-aminoacyl-tRNA + H2O = an N-acyl-L-amino acid + a tRNA + H(+). Functionally, hydrolyzes ribosome-free peptidyl-tRNAs (with 1 or more amino acids incorporated), which drop off the ribosome during protein synthesis, or as a result of ribosome stalling. Catalyzes the release of premature peptidyl moieties from peptidyl-tRNA molecules trapped in stalled 50S ribosomal subunits, and thus maintains levels of free tRNAs and 50S ribosomes. The chain is Peptidyl-tRNA hydrolase from Geobacter sp. (strain M21).